Here is a 486-residue protein sequence, read N- to C-terminus: Protein ZINC INDUCED FACILITATOR 1 (486 aa).

A run of 12 helical transmembrane segments spans residues 41 to 61 (FVWI…PFLY), 82 to 102 (FVGC…GIVA), 109 to 129 (PIIL…GLSS), 131 to 151 (FWMA…LGTM), 170 to 190 (AVST…GFLA), 212 to 232 (ALPC…CCFI), 288 to 308 (IIVY…FALW), 327 to 347 (TVLA…YPLA), 362 to 384 (ALMI…SLSL), 391 to 408 (ILIN…LILQ), 423 to 443 (IAMT…GILF), and 461 to 481 (VFFV…KPFL).

The protein belongs to the major facilitator superfamily. In terms of tissue distribution, strongly expressed in developing leaves, differentiating zones of root tips and sepals of developing flowers. Restricted to vascular tissues in older leaves, mature roots, flowers, anthers and filaments. Not expressed in developing anthers.

The protein localises to the vacuole membrane. Major facilitator superfamily (MFS) transporter involved in zinc tolerance by participating in vacuolar sequestration of zinc. The protein is Protein ZINC INDUCED FACILITATOR 1 (ZIF1) of Arabidopsis thaliana (Mouse-ear cress).